The primary structure comprises 351 residues: Glycerol-1-phosphate dehydrogenase [NAD(P)+] (351 aa).

Residues 93 to 97 (GKVLD) and 115 to 118 (TTAS) contribute to the NAD(+) site. Residue D120 coordinates substrate. S124 contributes to the NAD(+) binding site. Residue D167 participates in substrate binding. Zn(2+) contacts are provided by D167 and H247. Residue H251 coordinates substrate. Residue H263 coordinates Zn(2+).

Belongs to the glycerol-1-phosphate dehydrogenase family. The cofactor is Zn(2+).

The protein localises to the cytoplasm. The catalysed reaction is sn-glycerol 1-phosphate + NAD(+) = dihydroxyacetone phosphate + NADH + H(+). The enzyme catalyses sn-glycerol 1-phosphate + NADP(+) = dihydroxyacetone phosphate + NADPH + H(+). It participates in membrane lipid metabolism; glycerophospholipid metabolism. Catalyzes the NAD(P)H-dependent reduction of dihydroxyacetonephosphate (DHAP or glycerone phosphate) to glycerol 1-phosphate (G1P). The G1P thus generated is used as the glycerophosphate backbone of phospholipids in the cellular membranes of Archaea. The sequence is that of Glycerol-1-phosphate dehydrogenase [NAD(P)+] from Archaeoglobus fulgidus (strain ATCC 49558 / DSM 4304 / JCM 9628 / NBRC 100126 / VC-16).